A 440-amino-acid chain; its full sequence is MQYHDAMALINRLDSRDPGFKTALSQLLAFEAEQDESIDQAAAGILADVRRRGDAALLEYTQRFDRLAVDDATALEIPQADWHAALDSLPAAQRQALEAAAARVRAYHERQRGETWTYTEADGTMLGQQITALDRVGLYVPGGKAAYPSSVLMNAIPAKVAGVPELIMVTPTPDGVRNPIVLAAAAIAGVDRAFAIGGAQAVGALAYGTATVPAVDKIVGPGNAYVAAAKRRVFGTVGIDMIAGPSEILVICDGKTPADWIAMDLFSQAEHDELAQSILLCPDAAFLAEVEAAIERLLPGMPRADILRVSLANRGALILVRDLEEACAIANDIAPEHLEISTEQPQRWTALIRHAGAIFMGRYSSEALGDYCAGPNHVLPTSRTARFSSPLGVYDFQKRSSLIQVSREGAQTLGRIAAELALGEGLQAHAASAQYRLDQP.

3 residues coordinate NAD(+): Tyr-139, Gln-200, and Asn-223. Residues Ser-246, Gln-268, and His-271 each contribute to the substrate site. Residues Gln-268 and His-271 each contribute to the Zn(2+) site. Catalysis depends on proton acceptor residues Glu-336 and His-337. Substrate contacts are provided by His-337, Asp-370, Glu-424, and His-429. Asp-370 provides a ligand contact to Zn(2+). His-429 is a Zn(2+) binding site.

This sequence belongs to the histidinol dehydrogenase family. The cofactor is Zn(2+).

It carries out the reaction L-histidinol + 2 NAD(+) + H2O = L-histidine + 2 NADH + 3 H(+). It participates in amino-acid biosynthesis; L-histidine biosynthesis; L-histidine from 5-phospho-alpha-D-ribose 1-diphosphate: step 9/9. Functionally, catalyzes the sequential NAD-dependent oxidations of L-histidinol to L-histidinaldehyde and then to L-histidine. This chain is Histidinol dehydrogenase, found in Bordetella bronchiseptica (strain ATCC BAA-588 / NCTC 13252 / RB50) (Alcaligenes bronchisepticus).